Here is a 316-residue protein sequence, read N- to C-terminus: Tyrosine recombinase XerD (316 aa).

A Core-binding (CB) domain is found at 4-97; the sequence is AALQTQLQGY…AVRGLHRFAV (94 aa). The 192-residue stretch at 118-309 folds into the Tyr recombinase domain; sequence RLPKSLTVDE…TVQALREVWA (192 aa). Residues Arg-162, Lys-186, His-261, Arg-264, and His-287 contribute to the active site. Residue Tyr-296 is the O-(3'-phospho-DNA)-tyrosine intermediate of the active site.

The protein belongs to the 'phage' integrase family. XerD subfamily. Forms a cyclic heterotetrameric complex composed of two molecules of XerC and two molecules of XerD.

It localises to the cytoplasm. Site-specific tyrosine recombinase, which acts by catalyzing the cutting and rejoining of the recombining DNA molecules. The XerC-XerD complex is essential to convert dimers of the bacterial chromosome into monomers to permit their segregation at cell division. It also contributes to the segregational stability of plasmids. This chain is Tyrosine recombinase XerD, found in Mycobacterium leprae (strain TN).